The chain runs to 146 residues: Cysteine protease inhibitor 3 (146 aa).

Intrachain disulfides connect C8/C60 and C109/C115.

Belongs to the protease inhibitor I3 (leguminous Kunitz-type inhibitor) family.

The protein resides in the vacuole. In terms of biological role, inhibitor of cysteine proteases. May protect the plant by inhibiting proteases of invading organisms. The sequence is that of Cysteine protease inhibitor 3 from Solanum tuberosum (Potato).